The sequence spans 294 residues: ATP synthase gamma chain (294 aa).

It belongs to the ATPase gamma chain family. In terms of assembly, F-type ATPases have 2 components, CF(1) - the catalytic core - and CF(0) - the membrane proton channel. CF(1) has five subunits: alpha(3), beta(3), gamma(1), delta(1), epsilon(1). CF(0) has three main subunits: a, b and c.

It localises to the cell inner membrane. In terms of biological role, produces ATP from ADP in the presence of a proton gradient across the membrane. The gamma chain is believed to be important in regulating ATPase activity and the flow of protons through the CF(0) complex. The protein is ATP synthase gamma chain of Campylobacter jejuni subsp. jejuni serotype O:2 (strain ATCC 700819 / NCTC 11168).